The primary structure comprises 144 residues: Urease subunit beta (144 aa).

The span at 110–119 (HAAPAAPAIP) shows a compositional bias: low complexity. The segment at 110-144 (HAAPAAPAIPARHESAAGDAPSPLKERAGFDNETR) is disordered. The span at 133-144 (LKERAGFDNETR) shows a compositional bias: basic and acidic residues.

This sequence belongs to the urease beta subunit family. Heterotrimer of UreA (gamma), UreB (beta) and UreC (alpha) subunits. Three heterotrimers associate to form the active enzyme.

It is found in the cytoplasm. The enzyme catalyses urea + 2 H2O + H(+) = hydrogencarbonate + 2 NH4(+). It functions in the pathway nitrogen metabolism; urea degradation; CO(2) and NH(3) from urea (urease route): step 1/1. The chain is Urease subunit beta from Micrococcus luteus (strain ATCC 4698 / DSM 20030 / JCM 1464 / CCM 169 / CCUG 5858 / IAM 1056 / NBRC 3333 / NCIMB 9278 / NCTC 2665 / VKM Ac-2230) (Micrococcus lysodeikticus).